We begin with the raw amino-acid sequence, 124 residues long: Small ribosomal subunit protein uS12 (124 aa).

Residue aspartate 89 is modified to 3-methylthioaspartic acid. A disordered region spans residues 105-124 (QGVKNRKQARSRYGAKKEKS). Positions 108–118 (KNRKQARSRYG) are enriched in basic residues.

Belongs to the universal ribosomal protein uS12 family. In terms of assembly, part of the 30S ribosomal subunit. Contacts proteins S8 and S17. May interact with IF1 in the 30S initiation complex.

Its function is as follows. With S4 and S5 plays an important role in translational accuracy. Interacts with and stabilizes bases of the 16S rRNA that are involved in tRNA selection in the A site and with the mRNA backbone. Located at the interface of the 30S and 50S subunits, it traverses the body of the 30S subunit contacting proteins on the other side and probably holding the rRNA structure together. The combined cluster of proteins S8, S12 and S17 appears to hold together the shoulder and platform of the 30S subunit. The polypeptide is Small ribosomal subunit protein uS12 (Mycobacterium leprae (strain Br4923)).